Reading from the N-terminus, the 360-residue chain is Ribosomal RNA large subunit methyltransferase M (360 aa).

Residues Ser-190, 223 to 226 (CPGG), Asp-242, Asp-262, and Asp-280 contribute to the S-adenosyl-L-methionine site. Lys-309 (proton acceptor) is an active-site residue.

Belongs to the class I-like SAM-binding methyltransferase superfamily. RNA methyltransferase RlmE family. RlmM subfamily. Monomer.

It localises to the cytoplasm. The enzyme catalyses cytidine(2498) in 23S rRNA + S-adenosyl-L-methionine = 2'-O-methylcytidine(2498) in 23S rRNA + S-adenosyl-L-homocysteine + H(+). Its function is as follows. Catalyzes the 2'-O-methylation at nucleotide C2498 in 23S rRNA. This is Ribosomal RNA large subunit methyltransferase M from Haemophilus ducreyi (strain 35000HP / ATCC 700724).